A 680-amino-acid polypeptide reads, in one-letter code: Harmonin-binding protein USHBP1 (680 aa).

The span at 1 to 15 (MSARATRPRSRRGRH) shows a compositional bias: basic residues. Disordered stretches follow at residues 1 to 101 (MSAR…GPAE), 135 to 162 (PVEA…GQQE), and 217 to 250 (ASPP…DSPM). Residues 76-86 (PEERREPEVEA) show a composition bias toward basic and acidic residues. Coiled coils occupy residues 177-219 (LGTR…EASP), 362-386 (ATNG…VAMD), and 479-506 (LADL…LRAQ). The tract at residues 524–562 (LMGDGSSGGSSEDPSSEEEAGEDRQQHYQGPPALLGGQM) is disordered. The stretch at 573 to 661 (QELSASLTRA…QQAEELAVLT (89 aa)) forms a coiled coil.

The protein belongs to the MCC family. As to quaternary structure, interacts via its C-terminus with the first PDZ domain of USH1C.

The chain is Harmonin-binding protein USHBP1 from Rattus norvegicus (Rat).